A 339-amino-acid chain; its full sequence is Phosphate acyltransferase (339 aa).

Belongs to the PlsX family. Homodimer. Probably interacts with PlsY.

It localises to the cytoplasm. The enzyme catalyses a fatty acyl-[ACP] + phosphate = an acyl phosphate + holo-[ACP]. The protein operates within lipid metabolism; phospholipid metabolism. Functionally, catalyzes the reversible formation of acyl-phosphate (acyl-PO(4)) from acyl-[acyl-carrier-protein] (acyl-ACP). This enzyme utilizes acyl-ACP as fatty acyl donor, but not acyl-CoA. The sequence is that of Phosphate acyltransferase from Brachyspira hyodysenteriae (strain ATCC 49526 / WA1).